We begin with the raw amino-acid sequence, 195 residues long: MASMAFTLVGAFKGMSLSSPCHSSSSASFLRADRVSLSVGGGVGMGVPMTMPVRRLTIQMAHKKGAGSTKNGRDSPGQRLGVKIYGDQVAKPGAIIIRQRGTRVYPGNNVGMGKDHTLFSLIDGLVKFEKYGPDKKKVSVYPYEKQPENPNSYRARKREYFRMQRERKKARAEGIVEVQLVLAAADESPEVNADC.

The N-terminal 60 residues, 1–60 (MASMAFTLVGAFKGMSLSSPCHSSSSASFLRADRVSLSVGGGVGMGVPMTMPVRRLTIQM), are a transit peptide targeting the chloroplast.

This sequence belongs to the bacterial ribosomal protein bL27 family. Part of the 50S ribosomal subunit.

It localises to the plastid. The protein resides in the chloroplast. The sequence is that of Large ribosomal subunit protein bL27c (RPL27) from Oryza sativa subsp. japonica (Rice).